We begin with the raw amino-acid sequence, 215 residues long: DNA repair and recombination protein RadB (215 aa).

Belongs to the eukaryotic RecA-like protein family. RadB subfamily.

Its function is as follows. Involved in DNA repair and in homologous recombination. May regulate the cleavage reactions of the branch-structured DNA. Has a very weak ATPase activity that is not stimulated by DNA. Binds DNA but does not promote DNA strands exchange. This Methanococcus maripaludis (strain C7 / ATCC BAA-1331) protein is DNA repair and recombination protein RadB.